A 51-amino-acid polypeptide reads, in one-letter code: Ovomucoid (51 aa).

A Kazal-like domain is found at 3–51; the sequence is IDCSGYPKPACTLEFFPLCGSDNQTYSNKCAFCNAAVEKNVTLNHIGEC. 3 cysteine pairs are disulfide-bonded: cysteine 5/cysteine 35, cysteine 13/cysteine 32, and cysteine 21/cysteine 51. A glycan (N-linked (GlcNAc...) asparagine) is linked at asparagine 42.

The protein resides in the secreted. This is Ovomucoid from Eudromia elegans (Elegant crested-tinamou).